Reading from the N-terminus, the 420-residue chain is Gamma-glutamyl phosphate reductase (420 aa).

Belongs to the gamma-glutamyl phosphate reductase family.

The protein localises to the cytoplasm. It catalyses the reaction L-glutamate 5-semialdehyde + phosphate + NADP(+) = L-glutamyl 5-phosphate + NADPH + H(+). It participates in amino-acid biosynthesis; L-proline biosynthesis; L-glutamate 5-semialdehyde from L-glutamate: step 2/2. In terms of biological role, catalyzes the NADPH-dependent reduction of L-glutamate 5-phosphate into L-glutamate 5-semialdehyde and phosphate. The product spontaneously undergoes cyclization to form 1-pyrroline-5-carboxylate. The protein is Gamma-glutamyl phosphate reductase of Streptococcus sanguinis (strain SK36).